Reading from the N-terminus, the 336-residue chain is tRNA N6-adenosine threonylcarbamoyltransferase (336 aa).

Residues histidine 114 and histidine 118 each coordinate Fe cation. Substrate is bound by residues 136-140 (LVSGG), aspartate 169, glycine 182, aspartate 186, and asparagine 275. Residue aspartate 301 coordinates Fe cation.

This sequence belongs to the KAE1 / TsaD family. Fe(2+) is required as a cofactor.

It localises to the cytoplasm. It catalyses the reaction L-threonylcarbamoyladenylate + adenosine(37) in tRNA = N(6)-L-threonylcarbamoyladenosine(37) in tRNA + AMP + H(+). Functionally, required for the formation of a threonylcarbamoyl group on adenosine at position 37 (t(6)A37) in tRNAs that read codons beginning with adenine. Is involved in the transfer of the threonylcarbamoyl moiety of threonylcarbamoyl-AMP (TC-AMP) to the N6 group of A37, together with TsaE and TsaB. TsaD likely plays a direct catalytic role in this reaction. In Streptococcus sanguinis (strain SK36), this protein is tRNA N6-adenosine threonylcarbamoyltransferase.